The sequence spans 204 residues: Inner membrane protein YagU (204 aa).

The Periplasmic segment spans residues 1-14; sequence MNIFEQTPPNRRRY. The helical transmembrane segment at 15–35 threads the bilayer; the sequence is GLAAFIGLIAGVVSAFVKWGA. Residues 36 to 100 are Cytoplasmic-facing; the sequence is EVPLPPRSPV…VYTFAGHVFN (65 aa). Residues 101–121 form a helical membrane-spanning segment; sequence WVGVTHIIFSIVFAVGYCVVA. The Periplasmic portion of the chain corresponds to 122–132; that stretch reads EVFPKIKLWQG. A helical transmembrane segment spans residues 133–153; it reads LLAGALAQLFVHMISFPLMGL. The Cytoplasmic portion of the chain corresponds to 154-204; sequence TPPLFDLPWYENVSEIFGHLVWFWSIEIIRRDLRNRITHEPDPEIPLGSNR.

In terms of assembly, homodimer.

It is found in the cell inner membrane. The chain is Inner membrane protein YagU (yagU) from Escherichia coli (strain K12).